A 210-amino-acid chain; its full sequence is Cytidylate kinase (210 aa).

Residue 9–17 (GPAAAGKGT) coordinates ATP.

This sequence belongs to the cytidylate kinase family. Type 1 subfamily.

It is found in the cytoplasm. It carries out the reaction CMP + ATP = CDP + ADP. The enzyme catalyses dCMP + ATP = dCDP + ADP. This is Cytidylate kinase from Agrobacterium fabrum (strain C58 / ATCC 33970) (Agrobacterium tumefaciens (strain C58)).